The sequence spans 141 residues: Large ribosomal subunit protein uL11 (141 aa).

The protein belongs to the universal ribosomal protein uL11 family. In terms of assembly, part of the ribosomal stalk of the 50S ribosomal subunit. Interacts with L10 and the large rRNA to form the base of the stalk. L10 forms an elongated spine to which L12 dimers bind in a sequential fashion forming a multimeric L10(L12)X complex. In terms of processing, one or more lysine residues are methylated.

Its function is as follows. Forms part of the ribosomal stalk which helps the ribosome interact with GTP-bound translation factors. This Nautilia profundicola (strain ATCC BAA-1463 / DSM 18972 / AmH) protein is Large ribosomal subunit protein uL11.